A 606-amino-acid chain; its full sequence is Pickpocket protein 28 (606 aa).

A disordered region spans residues 1–26 (MRTLTESRRRQSGSSGCKKDSESDDD). The next 2 membrane-spanning stretches (helical) occupy residues 66–86 (IFFG…ISNV) and 490–510 (GLLG…FFYI).

This sequence belongs to the amiloride-sensitive sodium channel (TC 1.A.6) family. In terms of tissue distribution, expressed in water-sensing neurons in taste bristles on the proboscis but not in carbonation-sensing taste peg neurons (at protein level). Expressed in the tracheal system.

The protein localises to the cell membrane. In terms of biological role, osmosensitive ion channel that mediates the cellular and behavioral response to water. Plays an essential role in gustatory water reception. Part of a complex that plays a role in tracheal liquid clearance. Probable role in sodium transport. This is Pickpocket protein 28 (ppk28) from Drosophila melanogaster (Fruit fly).